We begin with the raw amino-acid sequence, 672 residues long: ABC transporter G family member 21 (672 aa).

Polar residues predominate over residues 1–35 (MMPPNEQESSFPKTPSANRHETSPVQENRFSSPSH). A disordered region spans residues 1-59 (MMPPNEQESSFPKTPSANRHETSPVQENRFSSPSHVNPCLDDDNDHDGPSHQSRQSSVL). Residues 50 to 59 (SHQSRQSSVL) show a composition bias toward low complexity. Residues 68–322 (LKFEELTYSI…FGSIGYQPGS (255 aa)) enclose the ABC transporter domain. 117 to 124 (GPSGSGKT) provides a ligand contact to ATP. The ABC transmembrane type-2 domain occupies 411-617 (MQFSVLLKRG…CYKLLVGVQY (207 aa)). 6 helical membrane passes run 429-449 (FSGL…LLWW), 460-480 (VGLL…NAIF), 512-532 (LPME…MGGL), 543-563 (LMIV…LGAI), 576-596 (VLML…PGFI), and 649-669 (WDVL…YLAL).

Belongs to the ABC transporter superfamily. ABCG family. Eye pigment precursor importer (TC 3.A.1.204) subfamily.

Its subcellular location is the membrane. In Arabidopsis thaliana (Mouse-ear cress), this protein is ABC transporter G family member 21 (ABCG21).